A 294-amino-acid chain; its full sequence is 4-hydroxy-tetrahydrodipicolinate synthase (294 aa).

Thr-47 contacts pyruvate. The active-site Proton donor/acceptor is Tyr-135. The active-site Schiff-base intermediate with substrate is the Lys-163. Thr-205 serves as a coordination point for pyruvate.

Belongs to the DapA family. In terms of assembly, homotetramer; dimer of dimers.

It localises to the cytoplasm. It carries out the reaction L-aspartate 4-semialdehyde + pyruvate = (2S,4S)-4-hydroxy-2,3,4,5-tetrahydrodipicolinate + H2O + H(+). The protein operates within amino-acid biosynthesis; L-lysine biosynthesis via DAP pathway; (S)-tetrahydrodipicolinate from L-aspartate: step 3/4. Catalyzes the condensation of (S)-aspartate-beta-semialdehyde [(S)-ASA] and pyruvate to 4-hydroxy-tetrahydrodipicolinate (HTPA). The protein is 4-hydroxy-tetrahydrodipicolinate synthase of Rickettsia felis (strain ATCC VR-1525 / URRWXCal2) (Rickettsia azadi).